A 168-amino-acid chain; its full sequence is Bifunctional protein PyrR (168 aa).

Positions 90–102 (LVLIDDVLMSGRT) match the PRPP-binding motif.

Belongs to the purine/pyrimidine phosphoribosyltransferase family. PyrR subfamily.

It catalyses the reaction UMP + diphosphate = 5-phospho-alpha-D-ribose 1-diphosphate + uracil. Functionally, regulates the transcription of the pyrimidine nucleotide (pyr) operon in response to exogenous pyrimidines. Its function is as follows. Also displays a weak uracil phosphoribosyltransferase activity which is not physiologically significant. This is Bifunctional protein PyrR from Pseudomonas fluorescens (strain ATCC BAA-477 / NRRL B-23932 / Pf-5).